Reading from the N-terminus, the 158-residue chain is C-type lectin mannose-binding isoform (158 aa).

A signal peptide spans 1 to 20 (MGRFLLVTLSMLVVTFSLNE). 3 cysteine pairs are disulfide-bonded: C26–C37, C54–C154, and C129–C146. One can recognise a C-type lectin domain in the interval 33–155 (KNGFCYKVFN…CEALYHFICQ (123 aa)). Positions 119 to 121 (EPN) match the Mannose-binding motif. An N-linked (GlcNAc...) asparagine glycan is attached at N121. The Ca(2+) site is built by E127, N142, and D143.

This sequence belongs to the true venom lectin family. As to quaternary structure, homodimer; disulfide-linked. Expressed by the venom gland.

The protein resides in the secreted. Mannose-binding lectin that binds to and agglutinates erythrocytes in a calcium-dependent manner. The chain is C-type lectin mannose-binding isoform from Notechis scutatus scutatus (Mainland tiger snake).